The sequence spans 35 residues: Photosystem II reaction center protein M (35 aa).

M1 carries the post-translational modification N-formylmethionine. Residues 7 to 28 traverse the membrane as a helical segment; that stretch reads GFIASILFVLVPTVFLLILFIQ.

The protein belongs to the PsbM family. PSII is composed of 1 copy each of membrane proteins PsbA, PsbB, PsbC, PsbD, PsbE, PsbF, PsbH, PsbI, PsbJ, PsbK, PsbL, PsbM, PsbT, PsbX, PsbY, PsbZ, Psb30/Ycf12, peripheral proteins PsbO, CyanoQ (PsbQ), PsbU, PsbV and a large number of cofactors. It forms dimeric complexes.

Its subcellular location is the cellular thylakoid membrane. Functionally, one of the components of the core complex of photosystem II (PSII). PSII is a light-driven water:plastoquinone oxidoreductase that uses light energy to abstract electrons from H(2)O, generating O(2) and a proton gradient subsequently used for ATP formation. It consists of a core antenna complex that captures photons, and an electron transfer chain that converts photonic excitation into a charge separation. This subunit is found at the monomer-monomer interface. Involved in assembly of monomeric PSII from the CP43-less intermediate. The polypeptide is Photosystem II reaction center protein M (Synechocystis sp. (strain ATCC 27184 / PCC 6803 / Kazusa)).